Here is a 532-residue protein sequence, read N- to C-terminus: Membrane protein insertase YidC (532 aa).

A run of 6 helical transmembrane segments spans residues 6–26, 317–337, 342–362, 411–431, 451–473, and 496–516; these read IVLA…FAEY, AIDF…LTFF, GNWG…FWPL, GGCL…QALL, VWLA…GASM, and PIIF…YWLF.

This sequence belongs to the OXA1/ALB3/YidC family. Type 1 subfamily. As to quaternary structure, interacts with the Sec translocase complex via SecD. Specifically interacts with transmembrane segments of nascent integral membrane proteins during membrane integration.

Its subcellular location is the cell membrane. Functionally, required for the insertion and/or proper folding and/or complex formation of integral membrane proteins into the membrane. Involved in integration of membrane proteins that insert both dependently and independently of the Sec translocase complex, as well as at least some lipoproteins. Aids folding of multispanning membrane proteins. The sequence is that of Membrane protein insertase YidC from Lawsonia intracellularis (strain PHE/MN1-00).